A 222-amino-acid polypeptide reads, in one-letter code: Alpha-S2-casein (222 aa).

The N-terminal stretch at methionine 1–alanine 15 is a signal peptide. Residues serine 23, serine 24, serine 25, serine 28, serine 46, serine 71, serine 72, serine 73, serine 76, serine 144, serine 146, serine 150, and serine 158 each carry the phosphoserine modification. The stretch at residues serine 76–arginine 140 is a repeat. Residues serine 158–leucine 222 constitute a repeat.

The protein belongs to the alpha-casein family. As to expression, mammary gland specific. Secreted in milk.

The protein resides in the secreted. Important role in the capacity of milk to transport calcium phosphate. In terms of biological role, casocidin-I inhibits the growth of E.coli and S.carnosus. This chain is Alpha-S2-casein (CSN1S2), found in Bos taurus (Bovine).